A 294-amino-acid chain; its full sequence is HTH-type transcriptional regulator XapR (294 aa).

In terms of domain architecture, HTH lysR-type spans 7-64 (TDLKLLRYFLAVAEELHFGRAAARLNMSQPPLSIHIKELENQLGTQLFIRHSRSVVLT). The segment at residues 24 to 43 (FGRAAARLNMSQPPLSIHIK) is a DNA-binding region (H-T-H motif).

This sequence belongs to the LysR transcriptional regulatory family.

Its function is as follows. Positive regulator required for the expression of xapA and xapB. Binds to the inducer xanthosine. The polypeptide is HTH-type transcriptional regulator XapR (xapR) (Escherichia coli (strain K12)).